We begin with the raw amino-acid sequence, 523 residues long: Mediator of RNA polymerase II transcription subunit 1.2 (523 aa).

It belongs to the Mediator complex subunit 1 family. As to quaternary structure, component of the Mediator complex.

It localises to the nucleus. Functionally, component of the Mediator complex, a coactivator involved in the regulated transcription of nearly all RNA polymerase II-dependent genes. Mediator functions as a bridge to convey information from gene-specific regulatory proteins to the basal RNA polymerase II transcription machinery. Mediator is recruited to promoters by direct interactions with regulatory proteins and serves as a scaffold for the assembly of a functional preinitiation complex with RNA polymerase II and the general transcription factors. The chain is Mediator of RNA polymerase II transcription subunit 1.2 (mdt-1.2) from Caenorhabditis briggsae.